The primary structure comprises 309 residues: Ubiquitin domain-containing protein UBFD1 (309 aa).

Residues 1–80 (MAAAGAPDGM…VSNGEDAGGG (80 aa)) form a disordered region. A compositionally biased stretch (acidic residues) spans 9-19 (GMEEPGMDTEA). Over residues 35–57 (EAEAAAGAAAEDSGAARGSLQPA) the composition is skewed to low complexity. The Ubiquitin-like domain occupies 84 to 159 (ELVDLKIIWN…IMVVGSTIND (76 aa)). The interval 171–204 (QQDAKAEENKKEPLCRQKQHRKVLDKGKPEDVMP) is disordered. 2 stretches are compositionally biased toward basic and acidic residues: residues 174-185 (AKAEENKKEPLC) and 192-201 (KVLDKGKPED).

As to quaternary structure, binds polyubiquitin.

Functionally, may play a role as NF-kappa-B regulator. In Homo sapiens (Human), this protein is Ubiquitin domain-containing protein UBFD1 (UBFD1).